A 299-amino-acid chain; its full sequence is N-acetylaspartate synthetase (299 aa).

A compositionally biased stretch (pro residues) spans 44–57; that stretch reads AAPGPAAAPPPAAG. Residues 44-70 form a disordered region; that stretch reads AAPGPAAAPPPAAGPQPHGGTGGAGPP. Residues 60-70 show a composition bias toward gly residues; sequence PHGGTGGAGPP. The helical transmembrane segment at 118–138 threads the bilayer; sequence YALLAALCFAVTRSLLLTCLV. One can recognise an N-acetyltransferase domain in the interval 143-280; sequence LALRYYYSRK…VLPGMTLSLA (138 aa).

It belongs to the NAT8 family. As to expression, expressed in brain, kidney, liver and spleen. In brain, present in neurons but not in astrocytes (at protein level). Expressed in brain, thymus and spleen.

It localises to the cytoplasm. Its subcellular location is the microsome membrane. The protein resides in the mitochondrion membrane. It is found in the endoplasmic reticulum membrane. The catalysed reaction is L-aspartate + acetyl-CoA = N-acetyl-L-aspartate + CoA + H(+). Its activity is regulated as follows. Aminooxyacetic acid (AOAA) blocks its activity in both cytoplasm and mitochondria. Its function is as follows. Catalyzes the synthesis of N-acetylaspartate acid (NAA) from L-aspartate and acetyl-CoA. Promotes dopamine uptake by regulating TNF-alpha expression. Attenuates methamphetamine-induced inhibition of dopamine uptake. This chain is N-acetylaspartate synthetase (Nat8l), found in Mus musculus (Mouse).